A 231-amino-acid polypeptide reads, in one-letter code: LexA repressor (231 aa).

A DNA-binding region (H-T-H motif) is located at residues 28–48 (IREIGEALDIRSTNGVNDHLK). Active-site for autocatalytic cleavage activity residues include Ser-149 and Lys-186.

This sequence belongs to the peptidase S24 family. As to quaternary structure, homodimer.

It carries out the reaction Hydrolysis of Ala-|-Gly bond in repressor LexA.. Functionally, represses a number of genes involved in the response to DNA damage (SOS response), including recA and lexA. In the presence of single-stranded DNA, RecA interacts with LexA causing an autocatalytic cleavage which disrupts the DNA-binding part of LexA, leading to derepression of the SOS regulon and eventually DNA repair. The chain is LexA repressor from Anaeromyxobacter sp. (strain Fw109-5).